A 397-amino-acid chain; its full sequence is Trans-2-enoyl-CoA reductase [NADH] (397 aa).

NAD(+) contacts are provided by residues 53–58 (GCSNGY), 79–80 (FE), 116–117 (DA), and 144–145 (LA). Residue tyrosine 230 coordinates substrate. Tyrosine 240 functions as the Proton donor in the catalytic mechanism. NAD(+) contacts are provided by residues lysine 249 and 276 to 278 (LVT).

This sequence belongs to the TER reductase family. As to quaternary structure, monomer.

The enzyme catalyses a 2,3-saturated acyl-CoA + NAD(+) = a (2E)-enoyl-CoA + NADH + H(+). It functions in the pathway lipid metabolism; fatty acid biosynthesis. With respect to regulation, inhibited by lauroyl-CoA. Its function is as follows. Involved in the fatty acid synthesis (FAS II). Catalyzes the reduction of the carbon-carbon double bond of crotonyl-CoA to yield butyryl-CoA. In vitro it can also use hexenoyl-CoA and dodecenoyl-CoA as substrates. The polypeptide is Trans-2-enoyl-CoA reductase [NADH] (Treponema denticola (strain ATCC 35405 / DSM 14222 / CIP 103919 / JCM 8153 / KCTC 15104)).